Here is a 469-residue protein sequence, read N- to C-terminus: tRNA-2-methylthio-N(6)-dimethylallyladenosine synthase (469 aa).

In terms of domain architecture, MTTase N-terminal spans 22 to 142 (RKVFIKTYGC…LPEALRRAQQ (121 aa)). Cys-31, Cys-67, Cys-105, Cys-183, Cys-187, and Cys-190 together coordinate [4Fe-4S] cluster. Positions 169 to 401 (RARGVTAFLT…QALLLKQQQE (233 aa)) constitute a Radical SAM core domain. The 63-residue stretch at 404-466 (ESCIGKEIDL…TNSLFAERAE (63 aa)) folds into the TRAM domain.

The protein belongs to the methylthiotransferase family. MiaB subfamily. In terms of assembly, monomer. [4Fe-4S] cluster serves as cofactor.

It localises to the cytoplasm. It carries out the reaction N(6)-dimethylallyladenosine(37) in tRNA + (sulfur carrier)-SH + AH2 + 2 S-adenosyl-L-methionine = 2-methylsulfanyl-N(6)-dimethylallyladenosine(37) in tRNA + (sulfur carrier)-H + 5'-deoxyadenosine + L-methionine + A + S-adenosyl-L-homocysteine + 2 H(+). Its function is as follows. Catalyzes the methylthiolation of N6-(dimethylallyl)adenosine (i(6)A), leading to the formation of 2-methylthio-N6-(dimethylallyl)adenosine (ms(2)i(6)A) at position 37 in tRNAs that read codons beginning with uridine. The sequence is that of tRNA-2-methylthio-N(6)-dimethylallyladenosine synthase from Rhizobium etli (strain CIAT 652).